The chain runs to 163 residues: MSIMPTLDMDKDTFTQVGYLYNLLDKIGHLGLFERDLSCYMLEVLAVDSQNMREINFAHRAKNSTTDVLSFPLDVSEGADSHILAKQMKICLGSVVINYELAQKVAKQRGHSTQDEISLLFIHGFLHILGYDHEVDNGEQRALEQKIIESLGLKESLIVRNTT.

3 residues coordinate Zn(2+): H123, H127, and H133.

This sequence belongs to the endoribonuclease YbeY family. Zn(2+) is required as a cofactor.

Its subcellular location is the cytoplasm. Single strand-specific metallo-endoribonuclease involved in late-stage 70S ribosome quality control and in maturation of the 3' terminus of the 16S rRNA. The polypeptide is Endoribonuclease YbeY (Helicobacter hepaticus (strain ATCC 51449 / 3B1)).